A 544-amino-acid polypeptide reads, in one-letter code: Cytochrome P450 2U1 (544 aa).

A run of 4 helical transmembrane segments spans residues 30-50 (LDPSGGALLLCGLVALLGWSW), 113-133 (VYGSIFSFFIGHYLVVVLSDF), 261-281 (ICLNSQVLLVNICPWLYYLPF), and 342-362 (LFYIIGDLFIAGTDTTTNSLL). Cysteine 490 provides a ligand contact to heme. The chain crosses the membrane as a helical span at residues 495–515 (LAKMELFLMFVSLMQSFAFAL).

The protein belongs to the cytochrome P450 family. Heme is required as a cofactor. As to expression, widely expressed with stronger expression in thymus, heart and cerebellum.

It is found in the endoplasmic reticulum membrane. It localises to the microsome membrane. The protein resides in the mitochondrion inner membrane. The enzyme catalyses an omega-methyl-long-chain fatty acid + reduced [NADPH--hemoprotein reductase] + O2 = an omega-hydroxy-long-chain fatty acid + oxidized [NADPH--hemoprotein reductase] + H2O + H(+). It catalyses the reaction (5Z,8Z,11Z,14Z)-eicosatetraenoate + reduced [NADPH--hemoprotein reductase] + O2 = 19-hydroxy-(5Z,8Z,11Z,14Z)-eicosatetraenoate + oxidized [NADPH--hemoprotein reductase] + H2O + H(+). The catalysed reaction is (5Z,8Z,11Z,14Z)-eicosatetraenoate + reduced [NADPH--hemoprotein reductase] + O2 = 20-hydroxy-(5Z,8Z,11Z,14Z)-eicosatetraenoate + oxidized [NADPH--hemoprotein reductase] + H2O + H(+). It carries out the reaction N-[(5Z,8Z,11Z,14Z)-eicosatetraenoyl]-serotonin + reduced [NADPH--hemoprotein reductase] + O2 = 2-oxo-N-[(5Z,8Z,11Z,14Z)-eicosatetraenoyl]-serotonin + oxidized [NADPH--hemoprotein reductase] + H2O + H(+). Its pathway is lipid metabolism; arachidonate metabolism. Its function is as follows. A cytochrome P450 monooxygenase involved in the metabolism of arachidonic acid and its conjugates. Mechanistically, uses molecular oxygen inserting one oxygen atom into a substrate, and reducing the second into a water molecule, with two electrons provided by NADPH via cytochrome P450 reductase (CPR; NADPH-ferrihemoprotein reductase). Acts as an omega and omega-1 hydroxylase for arachidonic acid and possibly for other long chain fatty acids. May modulate the arachidonic acid signaling pathway and play a role in other fatty acid signaling processes. May down-regulate the biological activities of N-arachidonoyl-serotonin, an endocannabinoid that has anti-nociceptive effects through inhibition of fatty acid amide hydrolase FAAH, TRPV1 receptor and T-type calcium channels. Catalyzes C-2 oxidation of the indole ring of N-arachidonoyl-serotonin forming a less active product 2-oxo-N-arachidonoyl-serotonin. In Homo sapiens (Human), this protein is Cytochrome P450 2U1.